Reading from the N-terminus, the 139-residue chain is D-ribose pyranase (139 aa).

The active-site Proton donor is the H20. Substrate is bound by residues D28, H106, and 128 to 130 (YAN).

The protein belongs to the RbsD / FucU family. RbsD subfamily. As to quaternary structure, homodecamer.

Its subcellular location is the cytoplasm. The catalysed reaction is beta-D-ribopyranose = beta-D-ribofuranose. Its pathway is carbohydrate metabolism; D-ribose degradation; D-ribose 5-phosphate from beta-D-ribopyranose: step 1/2. In terms of biological role, catalyzes the interconversion of beta-pyran and beta-furan forms of D-ribose. The polypeptide is D-ribose pyranase (Escherichia coli O127:H6 (strain E2348/69 / EPEC)).